We begin with the raw amino-acid sequence, 140 residues long: Photosystem I reaction center subunit XI (140 aa).

The next 3 helical transmembrane spans lie at 48–68 (LEIGMAHGYFLIGPFVQLGPL), 79–99 (LLSAIGLIVILTLGMLLYGAV), and 119–139 (SGFLLGAVGGAGFAYLLLTLF).

This sequence belongs to the PsaL family.

The protein localises to the plastid. The protein resides in the chloroplast thylakoid membrane. This Cyanidioschyzon merolae (strain NIES-3377 / 10D) (Unicellular red alga) protein is Photosystem I reaction center subunit XI.